The following is a 3014-amino-acid chain: MSTNPKPQRKTKRNTNRRPQDVKFPGGGQIVGGVYLLPRRGPRLGVRATRKTSERSQPRGRRQPIPKARQPTGRSWGQPGYPWPLYANEGLGWAGWLLSPRGSRPNWGPNDPRRKSRNLGKVIDTLTCGFADLMGYIPLVGGPVGGVARALAHGVRVLEDGVNYATGNLPGCSFSIFILALLSCLTVPTSAVPYRNASGVYHVTNDCPNSSIVYEAEDLILHAPGCVPCVRQGNVSRCWVQITPTLSAPSLGAVTAPLRRAVDYLAGGAALCSALYVGDACGAVFLVGQMFTYSPRRHNVVQDCNCSIYSGHITGHRMAWDMMMNWSPTTALVMAQLLRIPQVVIDIIAGAHWGVLFAAAYYASAANWAKVVLVLFLFAGVDANTRTVGGSAAQGARGLASLFTPGPQQNLQLINTNGSWHINRTALNCNDSLQTGFVAGLLYYHKFNSTGCPQRMASCRPLAAFDQGWGTISYAAVSGPSDDKPYCWHYPPRPCGIVPARGVCGPVYCFTPSPVVVGTTDRKGNPTYSWGENETDIFLLNNTRPPTGNWFGCTWMNSTGFVKTCGAPPCNLGPTGNNSLKCPTDCFRKHPDATYTKCGSGPWLTPRCLVHYPYRLWHYPCTLNYTIFKVRMYIGGLEHRLEVACNWTRGERCDLEDRDRAELSPLLHTTTQWAILPCSFTPTPALSTGLIHLHQNIVDTQYLYGLSSSIVSWAVKWEYIVLAFLLLADARICTCLWIMLLVCQAEAALENVIVLNAAAAAGTHGFFWGLLVICFAWHFKGRLVPGATYLCLGIWPLLLLLFLLPQRALALDSSDGGTVGCLVLTILTIFTLTPGYKKMVVLVIWWLQYFIARVEAFIHVWVPPLQVRGGRDAIIMLTCLFHPALGFEVTKILLGILGPLYLLQYSLIKLPYFIRARALLRACLLAKHLACGRYVQAALLHLGRLTGTYIYDHLAPMKDWAASGLRDLAVATEPIIFSPMETKVITWGADTAACGDILAGLPVSARRGHEIFLGPADDIREAGWRLLAPITAYAQQTRGVLGAIIVSLTGRDKNEAEGEVQVLSTATQTFLGTCINGVMWTVFHGAGAKTLAGPKGPVVQMYTNVDKDLVGWPTPPGTRSLTPCTCGSADLYLVTRHADVVPARRRGDTRASLLSPRPISYLKGSSGGPVMCPSGHVVGVFRAAVCTRGVAKALDFIPVENLETTMRSPVFTDNSTPPAVPHEFQVGHLHAPTGSGKSTKVPAAYAAQGYKVLVLNPSVAATLGFGAYMSRAYGVDPNIRTGVRTVTTGAAITYSTYGKFLADGGCSGGAYDVIICDECHSQDATTILGIGTVLDQAETAGARLVVLATATPPGSVTTPHPNIEEVALPSEGEIPFYGRAIPLALIKGGRHLIFCHSKKKCDELAKQLTSQGVNAVAYYRGLDVAVIPATGDVVVCSTDALMTGFTGDFDSVIDCNTTVTQTVDFSLDPTFTIETTTVPQDAVSRSQRRGRTGRGRHGIYRYVSSGERPSGIFDSVVLCECYDAGCAWYDLTPAETTVRLRAYLNTPGLPVCQDHLEFWEGVFTGLTNIDAHMLSQTKQGGENFPYLVAYQATVCVRAKAPPPSWDTMWKCMLRLKPTLTGPTPLLYRLGAVQNEITLTHPITKYIMACMSADLEVITSTWVLVGGVVAALAAYCLTVGSVAIVGRIILSGRPAIIPDREVLYQQFDEMEECSASLPYMDEARAIAEQFKEKVLGLIGTAGQKAETLKPAATSMWNRAEQFWAKHMWNFVSGIQYLAGLSTLPGNPAVATLMSFTAAVTSPLTTQQTLLFNILGGWVASQIAPPTAATAFVVSGMAGAAVGSIGLGRVLIDILAGYGAGVAGALVAFKIMCGEKPTAEDLVNLLPSILCPGALVVGVICAAVLRRHIGPGEGAVQWMNRLIAFASRGNHVSPTHYVPETDASAKVTQLLSSLTVTSLLKRLHTWIGEDYSTPCDGTWLRAIWDWVCTALTDFKAWLQAKLLPQLPGVPFLSCQRGYRGVWRGDGVNSTKCPCGATISGHVKNGTMRIVGPKLCSNTWHGTFPINATTTGPSVPAPAPNYKFALWRVGAADYAEVRRVGDYHYITGVTQDNLKCPCQVPSPEFFTELDGVRIHRYAPPCNPLLREEVCFSVGLHSFVVGSQLPCEPEPDVTVLTSMLSDPAHITAETAKRRLDRGSPPSLASSSASQLSAPSLKATCTTQGHHPDADLIEANLLWRQCMGGNITRVEAENKVVILDSFEPLKADDDDREISVSADCFRRGPAFPPALPIWARPGYDPPLLETWKQPDYDPPQVSGCPLPPAGLPPVPPPRRKRKPVVLSDSNVSQVLADLAHARFKADTQSIEGQDSAVGTSSQPDSGPEEKRDDDSDAASYSSMPPLEGEPGDPDLSSGSWSTVSDEDSVVCCSMSYSWTGALITPCSAEEEKLPINPLSNTLLRHHNLVYSTSSRSAGQRQKKVTFDRLQVLDDHYREVVDEMKRLASKVKARLLPLEEACGLTPPHSARSKYGYGAKEVRSLDKKALNHIKGVWQDLLDDSDTPLPTTIMAKNEVFAVEPSKGGKKPARLIVYPDLGVRVCEKRALYDIAQKLPTALMGPSYGFQYSPAQRVEFLLKTWRSKKTPMAFSYDTRCFDSTVTEHDIMTEESIYQSCDLQPEARAAIRSLTQRLYCGGPMYNSKGQQCGYRRCRASGVFTTSMGNTMTCYIKALASCRAAKLRDCTLLVCGDDLVAICESQGTHEDEASLRAFTEAMTRYSAPPGDPPVPAYDLELVTSCSSNVSVAHDASGNRVYYLTRDPQVPLARAAWETAKHSPVNSWLGNIIMYAPTLWARIVLMTHFFSVLQSQEQLEKALAFEMYGSVYSVTPLDLPAIIQRLHGLSAFTLHSYSPSEINRVSSCLRKLGVPPLRAWRHRARAVRAKLIAQGGKAAICGIYLFNWAVKTKRKLTPLADADRLDLSSWFTVGAGGGDIYHSMSRARPRCILLCLLLLTVGVGIFLLPAR.

N-acetylserine; by host is present on Ser-2. The interval 2 to 23 is interaction with STAT1; that stretch reads STNPKPQRKTKRNTNRRPQDVK. Residues 2 to 58 are interaction with EIF2AK2/PKR; that stretch reads STNPKPQRKTKRNTNRRPQDVKFPGGGQIVGGVYLLPRRGPRLGVRATRKTSERSQP. The segment at 2 to 59 is interaction with DDX3X; it reads STNPKPQRKTKRNTNRRPQDVKFPGGGQIVGGVYLLPRRGPRLGVRATRKTSERSQPR. Residues 2–75 form a disordered region; the sequence is STNPKPQRKT…PKARQPTGRS (74 aa). At 2–168 the chain is on the cytoplasmic side; the sequence is STNPKPQRKT…EDGVNYATGN (167 aa). 2 short sequence motifs (nuclear localization signal) span residues 5–13 and 38–43; these read PKPQRKTKR and PRRGPR. Basic residues predominate over residues 7–16; the sequence is PQRKTKRNTN. The segment covering 32 to 47 has biased composition (low complexity); the sequence is GGVYLLPRRGPRLGVR. Residue Ser-53 is modified to Phosphoserine; by host. 2 short sequence motifs (nuclear localization signal) span residues 58–64 and 66–71; these read PRGRRQP and PKARQP. A phosphoserine; by host mark is found at Ser-99 and Ser-116. An important for endoplasmic reticulum and mitochondrial localization region spans residues 112–152; sequence PRRKSRNLGKVIDTLTCGFADLMGYIPLVGGPVGGVARALA. The tract at residues 122 to 173 is interaction with APOA2; that stretch reads VIDTLTCGFADLMGYIPLVGGPVGGVARALAHGVRVLEDGVNYATGNLPGCS. The segment at 164–167 is important for lipid droplets localization; that stretch reads YATG. A helical membrane pass occupies residues 169–189; it reads LPGCSFSIFILALLSCLTVPT. A propeptide spans 178–191 (ER anchor for the core protein, removed in mature form by host signal peptidase); the sequence is ILALLSCLTVPTSA. Residues 190 to 358 are Lumenal-facing; the sequence is SAVPYRNASG…AGAHWGVLFA (169 aa). 3 N-linked (GlcNAc...) asparagine; by host glycosylation sites follow: Asn-196, Asn-209, and Asn-234. The segment at 265–296 is important for fusion; the sequence is LAGGAALCSALYVGDACGAVFLVGQMFTYSPR. N-linked (GlcNAc...) asparagine; by host glycosylation occurs at Asn-305. Residues 359–379 form a helical membrane-spanning segment; sequence AAYYASAANWAKVVLVLFLFA. Residues 380-726 are Lumenal-facing; that stretch reads GVDANTRTVG…WEYIVLAFLL (347 aa). The tract at residues 385–412 is HVR1; it reads TRTVGGSAAQGARGLASLFTPGPQQNLQ. Residues Asn-417, Asn-423, and Asn-430 are each glycosylated (N-linked (GlcNAc...) (high mannose) asparagine; by host). 4 disulfide bridges follow: Cys-429–Cys-553, Cys-452–Cys-459, Cys-487–Cys-495, and Cys-504–Cys-509. Asn-448 carries an N-linked (GlcNAc...) asparagine; by host glycan. Residues 475 to 479 are HVR2; that stretch reads AAVSG. Positions 481–494 are CD81-binding 1; the sequence is SDDKPYCWHYPPRP. A glycan (N-linked (GlcNAc...) asparagine; by host) is linked at Asn-533. The segment at 545–552 is CD81-binding 2; sequence PPTGNWFG. A glycan (N-linked (GlcNAc...) asparagine; by host) is linked at Asn-557. Residues Cys-565 and Cys-570 are joined by a disulfide bond. Asn-578 is a glycosylation site (N-linked (GlcNAc...) asparagine; by host). Cystine bridges form between Cys-582/Cys-586, Cys-598/Cys-621, and Cys-608/Cys-645. 2 N-linked (GlcNAc...) (high mannose) asparagine; by host glycosylation sites follow: Asn-624 and Asn-646. Residues Cys-653 and Cys-678 are joined by a disulfide bond. Residues 661-672 form a PKR/eIF2-alpha phosphorylation homology domain (PePHD) region; it reads AELSPLLHTTTQ. Residues 727–747 form a helical membrane-spanning segment; the sequence is LADARICTCLWIMLLVCQAEA. Residues 748 to 758 are Lumenal-facing; sequence ALENVIVLNAA. A helical transmembrane segment spans residues 759-779; sequence AAAGTHGFFWGLLVICFAWHF. Residues 780 to 783 are Cytoplasmic-facing; that stretch reads KGRL. Residues 784–804 form a helical membrane-spanning segment; the sequence is VPGATYLCLGIWPLLLLLFLL. Residues 805–814 are Lumenal-facing; the sequence is PQRALALDSS. The chain crosses the membrane as a helical span at residues 815 to 835; sequence DGGTVGCLVLTILTIFTLTPG. Over 836–882 the chain is Cytoplasmic; that stretch reads YKKMVVLVIWWLQYFIARVEAFIHVWVPPLQVRGGRDAIIMLTCLFH. A helical membrane pass occupies residues 883–903; the sequence is PALGFEVTKILLGILGPLYLL. The Lumenal portion of the chain corresponds to 904–929; that stretch reads QYSLIKLPYFIRARALLRACLLAKHL. Positions 904–1027 constitute a Peptidase C18 domain; the sequence is QYSLIKLPYF…DIREAGWRLL (124 aa). The segment at 905–1207 is protease NS2-3; that stretch reads YSLIKLPYFI…PVENLETTMR (303 aa). Residue Cys-923 is the site of S-palmitoyl cysteine; by host attachment. The helical transmembrane segment at 930–950 threads the bilayer; the sequence is ACGRYVQAALLHLGRLTGTYI. The interaction with host SCPS1 stretch occupies residues 930–950; that stretch reads ACGRYVQAALLHLGRLTGTYI. Topologically, residues 951 to 1658 are cytoplasmic; sequence YDHLAPMKDW…CMSADLEVIT (708 aa). Catalysis depends on for protease NS2 activity; shared with dimeric partner residues His-953, Glu-973, and Cys-994. The region spanning 1028-1209 is the Peptidase S29 domain; sequence APITAYAQQT…ENLETTMRSP (182 aa). Residues His-1084 and Asp-1108 each act as charge relay system; for serine protease NS3 activity in the active site. 2 residues coordinate Zn(2+): Cys-1124 and Cys-1126. Ser-1166 acts as the Charge relay system; for serine protease NS3 activity in catalysis. Zn(2+) contacts are provided by Cys-1172 and His-1176. Residues 1218–1370 enclose the Helicase ATP-binding domain; it reads PAVPHEFQVG…PNIEEVALPS (153 aa). 1231-1238 contributes to the ATP binding site; sequence APTGSGKS. 2 residues coordinate Mg(2+): Ser-1238 and Glu-1318. The DECH box motif lies at 1317 to 1320; the sequence is DECH. The tract at residues 1487–1499 is RNA-binding; that stretch reads QRRGRTGRGRHGI. Residues 1659–1679 traverse the membrane as a helical segment; it reads STWVLVGGVVAALAAYCLTVG. The segment at 1680-1691 is NS3-binding; that stretch reads SVAIVGRIILSG. At 1680 to 1806 the chain is on the cytoplasmic side; sequence SVAIVGRIIL…AVTSPLTTQQ (127 aa). The helical transmembrane segment at 1807–1827 threads the bilayer; that stretch reads TLLFNILGGWVASQIAPPTAA. Topologically, residues 1828–1829 are lumenal; the sequence is TA. A helical transmembrane segment spans residues 1830–1850; that stretch reads FVVSGMAGAAVGSIGLGRVLI. A topological domain (cytoplasmic) is located at residue Asp-1851. The helical transmembrane segment at 1852-1872 threads the bilayer; the sequence is ILAGYGAGVAGALVAFKIMCG. Topologically, residues 1873 to 1882 are lumenal; it reads EKPTAEDLVN. A helical transmembrane segment spans residues 1883–1903; it reads LLPSILCPGALVVGVICAAVL. Residues 1904 to 1973 lie on the Cytoplasmic side of the membrane; it reads RRHIGPGEGA…WIGEDYSTPC (70 aa). Residue Cys-1973 is the site of S-palmitoyl cysteine; by host attachment. Residues 1974–2003 lie within the membrane without spanning it; it reads DGTWLRAIWDWVCTALTDFKAWLQAKLLPQ. At 2004 to 2993 the chain is on the cytoplasmic side; the sequence is LPGVPFLSCQ…YHSMSRARPR (990 aa). Residues Cys-2012, Cys-2030, Cys-2032, and Cys-2053 each contribute to the Zn(2+) site. The segment at 2121–2209 is FKBP8-binding; the sequence is EFFTELDGVR…ASSSASQLSA (89 aa). Residues 2121 to 2334 are transcriptional activation; it reads EFFTELDGVR…VPPPRRKRKP (214 aa). Positions 2136–2140 are interaction with non-structural protein 4A; the sequence is PPCNP. Disordered stretches follow at residues 2187–2219, 2301–2337, and 2358–2413; these read AKRR…CTTQ, TWKQ…PVVL, and TQSI…SWST. The tract at residues 2190-2441 is interaction with host SKP2; the sequence is RLDRGSPPSL…ALITPCSAEE (252 aa). A phosphoserine; by host mark is found at Ser-2195, Ser-2198, Ser-2202, Ser-2205, Ser-2208, and Ser-2211. Positions 2195–2212 are enriched in low complexity; the sequence is SPPSLASSSASQLSAPSL. Residues 2211 to 2250 are ISDR; the sequence is SLKATCTTQGHHPDADLIEANLLWRQCMGGNITRVEAENK. Positions 2211–2276 are interaction with EIF2AK2/PKR; it reads SLKATCTTQG…REISVSADCF (66 aa). Residues 2250–2307 form an NS4B-binding region; that stretch reads KVVILDSFEPLKADDDDREISVSADCFRRGPAFPPALPIWARPGYDPPLLETWKQPDY. The V3 stretch occupies residues 2300–2378; sequence ETWKQPDYDP…GTSSQPDSGP (79 aa). Residues 2316–2327 show a composition bias toward pro residues; sequence PLPPAGLPPVPP. The short motif at 2323 to 2326 is the SH3-binding element; sequence PPVP. The Nuclear localization signal motif lies at 2328 to 2337; it reads PRRKRKPVVL. Polar residues predominate over residues 2358 to 2375; sequence TQSIEGQDSAVGTSSQPD. A Phosphoserine; by host modification is found at Ser-2465. Residues 2637–2755 form the RdRp catalytic domain; sequence PMAFSYDTRC…ICESQGTHED (119 aa). Mg(2+) is bound by residues Asp-2643, Asp-2741, and Asp-2742. A helical membrane pass occupies residues 2994 to 3014; sequence CILLCLLLLTVGVGIFLLPAR.

Belongs to the hepacivirus polyprotein family. In terms of assembly, homooligomer. Interacts with E1 (via C-terminus). Interacts with the non-structural protein 5A. Interacts (via N-terminus) with host STAT1 (via SH2 domain); this interaction results in decreased STAT1 phosphorylation and ubiquitin-mediated proteasome-dependent STAT1 degradation, leading to decreased IFN-stimulated gene transcription. Interacts with host STAT3; this interaction constitutively activates STAT3. Interacts with host LTBR receptor. Interacts with host TNFRSF1A receptor and possibly induces apoptosis. Interacts with host HNRPK. Interacts with host YWHAE. Interacts with host UBE3A/E6AP. Interacts with host DDX3X. Interacts with host APOA2. Interacts with host RXRA protein. Interacts with host SP110 isoform 3/Sp110b; this interaction sequesters the transcriptional corepressor SP110 away from the nucleus. Interacts with host CREB3 nuclear transcription protein; this interaction triggers cell transformation. Interacts with host ACY3. Interacts with host C1QR1. Interacts with host RBM24; this interaction, which enhances the interaction of the mature core protein with 5'-UTR, may inhibit viral translation and favor replication. Interacts with host EIF2AK2/PKR; this interaction induces the autophosphorylation of EIF2AK2. Part of the viral assembly initiation complex composed of NS2, E1, E2, NS3, NS4A, NS5A and the mature core protein. Forms a heterodimer with envelope glycoprotein E2. Interacts with mature core protein. Interacts with protease NS2. The heterodimer E1/E2 interacts with host CLDN1; this interaction plays a role in viral entry into host cell. Interacts with host SPSB2 (via C-terminus). Part of the viral assembly initiation complex composed of NS2, E1, E2, NS3, NS4A, NS5A and the mature core protein. Interacts with host NEURL3; this interaction prevents E1 binding to glycoprotein E2. As to quaternary structure, forms a heterodimer with envelope glycoprotein E1. Interacts with host CD81 and SCARB1 receptors; these interactions play a role in viral entry into host cell. Interacts with host EIF2AK2/PKR; this interaction inhibits EIF2AK2 and probably allows the virus to evade the innate immune response. Interacts with host CD209/DC-SIGN and CLEC4M/DC-SIGNR. Interact with host SPCS1; this interaction is essential for viral particle assembly. Interacts with protease NS2. The heterodimer E1/E2 interacts with host CLDN1; this interaction plays a role in viral entry into host cell. Part of the viral assembly initiation complex composed of NS2, E1, E2, NS3, NS4A, NS5A and the mature core protein. Interacts with host SLC3A2/4F2hc; the interaction may facilitate viral entry into host cell. Interacts with human PLSCR1. In terms of assembly, homohexamer. Homoheptamer. Interacts with protease NS2. Homodimer. Interacts with host SPCS1; this interaction is essential for viral particle assembly. Interacts with envelope glycoprotein E1. Interacts with envelope glycoprotein E2. Interacts with viroporin p7. Interacts with serine protease/helicase NS3. Part of the replication complex composed of NS2, NS3, NS4A, NS4B, NS5A and the RNA-directed RNA polymerase embedded in an ER-derived membranous web. Part of the viral assembly initiation complex composed of NS2, E1, E2, NS3, NS4A, NS5A and the mature core protein. As to quaternary structure, interacts with protease NS2. Interacts with non-structural protein 4A; this interaction stabilizes the folding of NS3 serine protease. NS3-NS4A interaction is essential for NS3 activation and allows membrane anchorage of the latter. NS3/NS4A complex also prevents phosphorylation of host IRF3, thus preventing the establishment of dsRNA induced antiviral state. Interacts with host MAVS; this interaction leads to the cleavage and inhibition of host MAVS. Interacts with host TICAM1; this interaction leads to the cleavage and inhibition of host TICAM1. Interacts with host TANK-binding kinase/TBK1; this interaction results in the inhibition of the association between TBK1 and IRF3, which leads to the inhibition of IRF3 activation. Interacts with host RBM24. Part of the replication complex composed of NS2, NS3, NS4A, NS4B, NS5A and the RNA-directed RNA polymerase embedded in an ER-derived membranous web. Part of the viral assembly initiation complex composed of NS2, E1, E2, NS3, NS4A, NS5A and the mature core protein. In terms of assembly, interacts with NS3 serine protease; this interaction stabilizes the folding of NS3 serine protease. NS3-NS4A interaction is essential for NS3 activation and allows membrane anchorage of the latter. Interacts with non-structural protein 5A (via N-terminus). Part of the replication complex composed of NS2, NS3, NS4A, NS4B, NS5A and the RNA-directed RNA polymerase embedded in an ER-derived membranous web. Part of the viral assembly initiation complex composed of NS2, E1, E2, NS3, NS4A, NS5A and the mature core protein. Homomultimer. Interacts with non-structural protein NS5A. Interacts with host PLA2G4C; this interaction likely initiates the recruitment of replication complexes to lipid droplets. Interacts with host STING; this interaction disrupts the interaction between STING and TBK1 thereby suppressing the interferon signaling. Part of the replication complex composed of NS2, NS3, NS4A, NS4B, NS5A and the RNA-directed RNA polymerase embedded in an ER-derived membranous web. As to quaternary structure, monomer. Homodimer; dimerization is required for RNA-binding. Interacts with the mature core protein. Interacts (via N-terminus) with non-structural protein 4A. Interacts with non-structural protein 4B. Interacts (via region D2) with RNA-directed RNA polymerase. Part of the viral assembly initiation complex composed of NS2, E1, E2, NS3, NS4A, NS5A and the mature core protein. Part of the replication complex composed of NS2, NS3, NS4A, NS4B, NS5A and the RNA-directed RNA polymerase embedded in an ER-derived membranous web. Interacts with host GRB2. Interacts with host BIN1. Interacts with host PIK3R1. Interacts with host SRCAP. Interacts with host FKBP8. Interacts (via C-terminus) with host VAPB (via MSP domain). Interacts with host EIF2AK2/PKR; this interaction leads to disruption of EIF2AK2 dimerization by NS5A and probably allows the virus to evade the innate immune response. Interacts (via N-terminus) with host PACSIN2 (via N-terminus); this interaction attenuates protein kinase C alpha-mediated phosphorylation of PACSIN2 by disrupting the interaction between PACSIN2 and PRKCA. Interacts (via N-terminus) with host SRC kinase (via SH2 domain). Interacts with most Src-family kinases. Interacts with host IFI27 and SKP2; promotes the ubiquitin-mediated proteasomal degradation of NS5A. Interacts with host GPS2. Interacts with host TNFRSF21; this interaction allows the modulation by the virus of JNK, p38 MAPK, STAT3, and Akt signaling pathways in a DR6-dependent manner. Interacts (via N-terminus) with host CIDEB (via N-terminus); this interaction seems to regulate the association of HCV particles with APOE. Interacts with host CHKA/Choline Kinase-alpha; CHKA bridges host PI4KA and NS5A and potentiates NS5A-stimulated PI4KA activity, which then facilitates the targeting of the ternary complex to the ER for viral replication. Interacts with host SPSB2 (via C-terminus); this interaction targets NS5A for ubiquitination and degradation. Interacts with host RAB18; this interaction may promote the association of NS5A and other replicase components with lipid droplets. Interacts (via region D2) with host PPIA/CYPA; the interaction stimulates RNA-binding ability of NS5A and is dependent on the peptidyl-prolyl cis-trans isomerase activity of PPIA/CYPA. Interacts with host TRIM14; this interaction induces the degradation of NS5A. In terms of assembly, homooligomer. Interacts with non-structural protein 5A. Interacts with host VAPB. Interacts with host PRK2/PKN2. Interacts with host HNRNPA1 and SEPT6; these interactions facilitate viral replication. Part of the replication complex composed of NS2, NS3, NS4A, NS4B, NS5A and the RNA-directed RNA polymerase. Requires Zn(2+) as cofactor. Mg(2+) serves as cofactor. Specific enzymatic cleavages in vivo yield mature proteins. The structural proteins, core, E1, E2 and p7 are produced by proteolytic processing by host signal peptidases. The core protein precursor is synthesized as a 23 kDa, which is retained in the ER membrane through the hydrophobic signal peptide. Cleavage by the signal peptidase releases the 21 kDa mature core protein. The cleavage of the core protein precursor occurs between aminoacids 176 and 188 but the exact cleavage site is not known. Some degraded forms of the core protein appear as well during the course of infection. The other proteins (p7, NS2, NS3, NS4A, NS4B, NS5A and NS5B) are cleaved by the viral proteases. Autoprocessing between NS2 and NS3 is mediated by the NS2 cysteine protease catalytic domain and regulated by the NS3 N-terminal domain. Post-translationally, phosphorylated by host PKC and PKA. In terms of processing, ubiquitinated; mediated by UBE3A and leading to core protein subsequent proteasomal degradation. Highly N-glycosylated. Post-translationally, palmitoylation is required for NS2/3 autoprocessing and E2 recruitment to membranes. In terms of processing, palmitoylated. This modification may play a role in its polymerization or in protein-protein interactions. Phosphorylated on serines in a basal form termed p56. p58 is a hyperphosphorylated form of p56. p56 and p58 coexist in the cell in roughly equivalent amounts. Hyperphosphorylation is dependent on the presence of NS4A. Host CSNK1A1/CKI-alpha or RPS6KB1 kinases may be responsible for NS5A phosphorylation. Post-translationally, tyrosine phosphorylation is essential for the interaction with host SRC. In terms of processing, the N-terminus is phosphorylated by host PRK2/PKN2.

The protein resides in the host endoplasmic reticulum membrane. It localises to the host mitochondrion membrane. Its subcellular location is the virion. It is found in the host cytoplasm. The protein localises to the host nucleus. The protein resides in the host lipid droplet. It localises to the virion membrane. Its subcellular location is the host mitochondrion. It is found in the host cell membrane. The protein localises to the host perinuclear region. It carries out the reaction Hydrolysis of four peptide bonds in the viral precursor polyprotein, commonly with Asp or Glu in the P6 position, Cys or Thr in P1 and Ser or Ala in P1'.. The catalysed reaction is a ribonucleoside 5'-triphosphate + H2O = a ribonucleoside 5'-diphosphate + phosphate + H(+). It catalyses the reaction ATP + H2O = ADP + phosphate + H(+). The enzyme catalyses RNA(n) + a ribonucleoside 5'-triphosphate = RNA(n+1) + diphosphate. With respect to regulation, inhibited by the antiviral drug hexamethylene amiloride. Inhibition by amantadine appears to be genotype-dependent. Also inhibited by long-alkyl-chain iminosugar derivatives. Its activity is regulated as follows. Activity is up-regulated by PRK2/PKN2-mediated phosphorylation. Its function is as follows. Packages viral RNA to form a viral nucleocapsid, and promotes virion budding. Participates in the viral particle production as a result of its interaction with the non-structural protein 5A. Binds RNA and may function as a RNA chaperone to induce the RNA structural rearrangements taking place during virus replication. Modulates viral translation initiation by interacting with viral IRES and 40S ribosomal subunit. Affects various cell signaling pathways, host immunity and lipid metabolism. Prevents the establishment of cellular antiviral state by blocking the interferon-alpha/beta (IFN-alpha/beta) and IFN-gamma signaling pathways and by blocking the formation of phosphorylated STAT1 and promoting ubiquitin-mediated proteasome-dependent degradation of STAT1. Activates STAT3 leading to cellular transformation. Regulates the activity of cellular genes, including c-myc and c-fos. May repress the promoter of p53, and sequester CREB3 and SP110 isoform 3/Sp110b in the cytoplasm. Represses cell cycle negative regulating factor CDKN1A, thereby interrupting an important check point of normal cell cycle regulation. Targets transcription factors involved in the regulation of inflammatory responses and in the immune response: suppresses TNF-induced NF-kappa-B activation, and activates AP-1. Binds to dendritic cells (DCs) via C1QR1, resulting in down-regulation of T-lymphocytes proliferation. Alters lipid metabolism by interacting with hepatocellular proteins involved in lipid accumulation and storage. Induces up-regulation of FAS promoter activity, and thereby contributes to the increased triglyceride accumulation in hepatocytes (steatosis). Forms a heterodimer with envelope glycoprotein E2, which mediates virus attachment to the host cell, virion internalization through clathrin-dependent endocytosis and fusion with host membrane. Fusion with the host cell is most likely mediated by both E1 and E2, through conformational rearrangements of the heterodimer required for fusion rather than a classical class II fusion mechanism. E1/E2 heterodimer binds host apolipoproteins such as APOB and ApoE thereby forming a lipo-viro-particle (LVP). APOE associated to the LVP allows the initial virus attachment to cell surface receptors such as the heparan sulfate proteoglycans (HSPGs), syndecan-1 (SDC1), syndecan-1 (SDC2), the low-density lipoprotein receptor (LDLR) and scavenger receptor class B type I (SCARB1). The cholesterol transfer activity of SCARB1 allows E2 exposure and binding of E2 to SCARB1 and the tetraspanin CD81. E1/E2 heterodimer binding on CD81 activates the epithelial growth factor receptor (EGFR) signaling pathway. Diffusion of the complex E1-E2-EGFR-SCARB1-CD81 to the cell lateral membrane allows further interaction with Claudin 1 (CLDN1) and occludin (OCLN) to finally trigger HCV entry. Functionally, forms a heterodimer with envelope glycoprotein E1, which mediates virus attachment to the host cell, virion internalization through clathrin-dependent endocytosis and fusion with host membrane. Fusion with the host cell is most likely mediated by both E1 and E2, through conformational rearrangements of the heterodimer required for fusion rather than a classical class II fusion mechanism. The interaction between envelope glycoprotein E2 and host apolipoprotein E/APOE allows the proper assembly, maturation and infectivity of the viral particles. This interaction is probably promoted via the up-regulation of cellular autophagy by the virus. E1/E2 heterodimer binds host apolipoproteins such as APOB and APOE thereby forming a lipo-viro-particle (LVP). APOE associated to the LVP allows the initial virus attachment to cell surface receptors such as the heparan sulfate proteoglycans (HSPGs), syndecan-1 (SDC1), syndecan-1 (SDC2), the low-density lipoprotein receptor (LDLR) and scavenger receptor class B type I (SCARB1). The cholesterol transfer activity of SCARB1 allows E2 exposure and binding of E2 to SCARB1 and the tetraspanin CD81. E1/E2 heterodimer binding on CD81 activates the epithelial growth factor receptor (EGFR) signaling pathway. Diffusion of the complex E1-E2-EGFR-SCARB1-CD81 to the cell lateral membrane allows further interaction with Claudin 1 (CLDN1) and occludin (OCLN) to finally trigger HCV entry. Inhibits host EIF2AK2/PKR activation, preventing the establishment of an antiviral state. Viral ligand for CD209/DC-SIGN and CLEC4M/DC-SIGNR, which are respectively found on dendritic cells (DCs), and on liver sinusoidal endothelial cells and macrophage-like cells of lymph node sinuses. These interactions allow the capture of circulating HCV particles by these cells and subsequent facilitated transmission to permissive cells such as hepatocytes and lymphocyte subpopulations. The interaction between E2 and host amino acid transporter complex formed by SLC3A2 and SLC7A5/LAT1 may facilitate viral entry into host cell. In terms of biological role, ion channel protein that acts as a viroporin and plays an essential role in the assembly, envelopment and secretion of viral particles. Regulates the host cell secretory pathway, which induces the intracellular retention of viral glycoproteins and favors assembly of viral particles. Creates a pore in acidic organelles and releases Ca(2+) and H(+) in the cytoplasm of infected cells, leading to a productive viral infection. High levels of cytoplasmic Ca(2+) may trigger membrane trafficking and transport of viral ER-associated proteins to viroplasms, sites of viral genome replication. This ionic imbalance induces the assembly of the inflammasome complex, which triggers the maturation of pro-IL-1beta into IL-1beta through the action of caspase-1. Targets also host mitochondria and induces mitochondrial depolarization. In addition of its role as a viroporin, acts as a lipid raft adhesion factor. Its function is as follows. Cysteine protease required for the proteolytic auto-cleavage between the non-structural proteins NS2 and NS3. The N-terminus of NS3 is required for the function of NS2 protease (active region NS2-3). Promotes the initiation of viral particle assembly by mediating the interaction between structural and non-structural proteins. Displays three enzymatic activities: serine protease with a chymotrypsin-like fold, NTPase and RNA helicase. NS3 serine protease, in association with NS4A, is responsible for the cleavages of NS3-NS4A, NS4A-NS4B, NS4B-NS5A and NS5A-NS5B. The NS3/NS4A complex prevents phosphorylation of host IRF3, thus preventing the establishment of dsRNA induced antiviral state. The NS3/NS4A complex induces host amino acid transporter component SLC3A2, thus contributing to HCV propagation. NS3 RNA helicase binds to RNA and unwinds both dsDNA and dsRNA in the 3' to 5' direction, and likely resolves RNA complicated stable secondary structures in the template strand. Binds a single ATP and catalyzes the unzipping of a single base pair of dsRNA. Inhibits host antiviral proteins TBK1 and IRF3 thereby preventing the establishment of an antiviral state. Cleaves host MAVS/CARDIF thereby preventing the establishment of an antiviral state. Cleaves host TICAM1/TRIF, thereby disrupting TLR3 signaling and preventing the establishment of an antiviral state. Functionally, peptide cofactor which forms a non-covalent complex with the N-terminal of NS3 serine protease. The NS3/NS4A complex prevents phosphorylation of host IRF3, thus preventing the establishment of dsRNA induced antiviral state. The NS3/NS4A complex induces host amino acid transporter component SLC3A2, thus contributing to HCV propagation. In terms of biological role, induces a specific membrane alteration that serves as a scaffold for the virus replication complex. This membrane alteration gives rise to the so-called ER-derived membranous web that contains the replication complex. NS4B self-interaction contributes to its function in membranous web formation. Promotes host TRIF protein degradation in a CASP8-dependent manner thereby inhibiting host TLR3-mediated interferon signaling. Disrupts the interaction between STING and TBK1 contributing to the inhibition of interferon signaling. Its function is as follows. Phosphorylated protein that is indispensable for viral replication and assembly. Both hypo- and hyperphosphorylated states are required for the viral life cycle. The hyperphosphorylated form of NS5A is an inhibitor of viral replication. Involved in RNA-binding and especially in binding to the viral genome. Zinc is essential for RNA-binding. Participates in the viral particle production as a result of its interaction with the mature viral core protein. Its interaction with host VAPB may target the viral replication complex to vesicles. Down-regulates viral IRES translation initiation. Mediates interferon resistance, presumably by interacting with and inhibiting host EIF2AK2/PKR. Prevents BIN1-induced apoptosis. Acts as a transcriptional activator of some host genes important for viral replication when localized in the nucleus. Via the interaction with host PACSIN2, modulates lipid droplet formation in order to promote virion assembly. Modulates TNFRSF21/DR6 signaling pathway for viral propagation. RNA-dependent RNA polymerase that performs primer-template recognition and RNA synthesis during viral replication. Initiates RNA transcription/replication at a flavin adenine dinucleotide (FAD), resulting in a 5'- FAD cap on viral RNAs. In this way, recognition of viral 5' RNA by host pattern recognition receptors can be bypassed, thereby evading activation of antiviral pathways. The protein is Genome polyprotein of Hepatitis C virus genotype 5a (isolate SA13) (HCV).